The chain runs to 339 residues: MFYKIAQKVMFQMDPERAHNLAIGSLRMTGNGPLNAFYAQNITPAPVSFMGLTFPNPVGLAAGMDKDGESIDAFHAMGFGHVEVGTVTPRPQPGNDLPRLFRLKPAKAIINRMGFNNKGVDNLVKNLIAKKTDIMVGVNIGKNKDTPVEQGKDDYLICMDKVYLHAAYIAVNISSPNTPGLRSLQYGDLLDELLSAIKAKQLELADKHKKYVPIALKIAPDLTIEEIENIAQALIKNQFDGAIATNTTLTRDGVSGLANANESGGLSGKPLTELSTKVIKQLATCLQGQIPIIGVGGINSAEDALAKFDAGATMVQIYSGFIYQGPKLIKEIVEAYRLK.

FMN is bound by residues 62 to 66 (AGMDK) and Thr86. Lys66 lines the substrate pocket. Residue 111-115 (NRMGF) participates in substrate binding. Positions 139 and 172 each coordinate FMN. Residue Asn172 participates in substrate binding. Catalysis depends on Ser175, which acts as the Nucleophile. Asn177 contacts substrate. Residues Lys217 and Thr245 each contribute to the FMN site. 246–247 (NT) is a binding site for substrate. Residues Gly268, Gly297, and 318–319 (YS) each bind FMN.

It belongs to the dihydroorotate dehydrogenase family. Type 2 subfamily. Monomer. FMN is required as a cofactor.

It localises to the cell membrane. It carries out the reaction (S)-dihydroorotate + a quinone = orotate + a quinol. The protein operates within pyrimidine metabolism; UMP biosynthesis via de novo pathway; orotate from (S)-dihydroorotate (quinone route): step 1/1. Its function is as follows. Catalyzes the conversion of dihydroorotate to orotate with quinone as electron acceptor. This chain is Dihydroorotate dehydrogenase (quinone), found in Shewanella oneidensis (strain ATCC 700550 / JCM 31522 / CIP 106686 / LMG 19005 / NCIMB 14063 / MR-1).